The following is a 345-amino-acid chain: MALYPFTAIVGQTEMIRAMLIATVEPTLGGVLAFGDRGTGKSTAVRALAALLPTMRAVAGCRYHCDPAARSALCPECRNRRAAGRLASERVRIPVVDLPLGATEDRVVGALDLERALADGVKAFEPGLLARAHRGFLYIDEINLLEDHLVDLLLDVAASGENVVEREGLSLRHPARFVLIGSGNPEEGELRPQLLDRFGLCVEVKTPTDLDQRIEVVRRRDAFEHDQAGFTRRFAADEAALRRQLVTAMKLLPLVSVPEAILRLAAKLCIELGTDGLRGELTLLRAARAEAALEGDTVVTESHLRAVAPAALRHRLRRDPLDESLAGARVERAMAALFSQAAIAR.

35-42 (GDRGTGKS) is an ATP binding site.

It belongs to the Mg-chelatase subunits D/I family.

It carries out the reaction protoporphyrin IX + Mg(2+) + ATP + H2O = Mg-protoporphyrin IX + ADP + phosphate + 3 H(+). It participates in porphyrin-containing compound metabolism; bacteriochlorophyll biosynthesis. Functionally, involved in bacteriochlorophyll biosynthesis; introduces a magnesium ion into protoporphyrin IX to yield Mg-protoporphyrin IX. This Acidiphilium rubrum protein is Magnesium-chelatase 38 kDa subunit (bchI).